The chain runs to 334 residues: uncharacterized protein (334 aa).

Helical transmembrane passes span 19-39 (AFLR…SFGI) and 55-75 (LIVL…AALF). Residues 308-334 (KPESKSSSQKSVETEIEKEVKDKLAKN) form a disordered region. A compositionally biased stretch (basic and acidic residues) spans 319–334 (VETEIEKEVKDKLAKN).

The protein resides in the cell membrane. This is an uncharacterized protein from Mycoplasma genitalium (strain ATCC 33530 / DSM 19775 / NCTC 10195 / G37) (Mycoplasmoides genitalium).